Here is a 357-residue protein sequence, read N- to C-terminus: IGF-like family receptor 1 (357 aa).

Positions 1-22 (MGPLRLLPTAVLLLAQAAPWEA) are cleaved as a signal peptide. Topologically, residues 23 to 160 (SQHCGRLEYW…HKAPQQAWPS (138 aa)) are extracellular. The segment at 100 to 147 (IPSGSRGGTGRPCREPVPNKEPCPLTPGKSSILSSQEPSSPGIPSVSW) is disordered. Over residues 129 to 139 (SSILSSQEPSS) the composition is skewed to low complexity. A helical membrane pass occupies residues 161 to 181 (LSFALFLVLVLLVTSAIILLA). Residues 182 to 357 (LQRHHRRLDQ…KLGSSGACLA (176 aa)) lie on the Cytoplasmic side of the membrane.

It localises to the cell membrane. Its function is as follows. Probable cell membrane receptor for the IGF-like family protein IGFL. The protein is IGF-like family receptor 1 (IGFLR1) of Bos taurus (Bovine).